A 167-amino-acid chain; its full sequence is SsrA-binding protein (167 aa).

The segment covering 139–158 (QNHDKRDAAKERDWQRDKQR) has biased composition (basic and acidic residues). The tract at residues 139 to 167 (QNHDKRDAAKERDWQRDKQRVMRRHNRDA) is disordered.

This sequence belongs to the SmpB family.

The protein resides in the cytoplasm. Functionally, required for rescue of stalled ribosomes mediated by trans-translation. Binds to transfer-messenger RNA (tmRNA), required for stable association of tmRNA with ribosomes. tmRNA and SmpB together mimic tRNA shape, replacing the anticodon stem-loop with SmpB. tmRNA is encoded by the ssrA gene; the 2 termini fold to resemble tRNA(Ala) and it encodes a 'tag peptide', a short internal open reading frame. During trans-translation Ala-aminoacylated tmRNA acts like a tRNA, entering the A-site of stalled ribosomes, displacing the stalled mRNA. The ribosome then switches to translate the ORF on the tmRNA; the nascent peptide is terminated with the 'tag peptide' encoded by the tmRNA and targeted for degradation. The ribosome is freed to recommence translation, which seems to be the essential function of trans-translation. This Xanthomonas oryzae pv. oryzae (strain PXO99A) protein is SsrA-binding protein.